The following is a 342-amino-acid chain: Ketol-acid reductoisomerase (NADP(+)) (342 aa).

Residues 2-181 (VKVYYNGDIK…GGARAGVLET (180 aa)) form the KARI N-terminal Rossmann domain. NADP(+) is bound by residues 25–28 (YGSQ), Arg48, Ser52, and 82–85 (DEQQ). The active site involves His107. An NADP(+)-binding site is contributed by Gly133. The 146-residue stretch at 182 to 327 (TFKEETETDL…RKLREMMPFV (146 aa)) folds into the KARI C-terminal knotted domain. The Mg(2+) site is built by Asp190, Glu194, Glu226, and Glu230. A substrate-binding site is contributed by Ser251.

It belongs to the ketol-acid reductoisomerase family. The cofactor is Mg(2+).

The catalysed reaction is (2R)-2,3-dihydroxy-3-methylbutanoate + NADP(+) = (2S)-2-acetolactate + NADPH + H(+). The enzyme catalyses (2R,3R)-2,3-dihydroxy-3-methylpentanoate + NADP(+) = (S)-2-ethyl-2-hydroxy-3-oxobutanoate + NADPH + H(+). It functions in the pathway amino-acid biosynthesis; L-isoleucine biosynthesis; L-isoleucine from 2-oxobutanoate: step 2/4. It participates in amino-acid biosynthesis; L-valine biosynthesis; L-valine from pyruvate: step 2/4. Functionally, involved in the biosynthesis of branched-chain amino acids (BCAA). Catalyzes an alkyl-migration followed by a ketol-acid reduction of (S)-2-acetolactate (S2AL) to yield (R)-2,3-dihydroxy-isovalerate. In the isomerase reaction, S2AL is rearranged via a Mg-dependent methyl migration to produce 3-hydroxy-3-methyl-2-ketobutyrate (HMKB). In the reductase reaction, this 2-ketoacid undergoes a metal-dependent reduction by NADPH to yield (R)-2,3-dihydroxy-isovalerate. The sequence is that of Ketol-acid reductoisomerase (NADP(+)) from Bacillus subtilis (strain 168).